The sequence spans 550 residues: Chaperonin GroEL (550 aa).

Residues 30–33 (TLGP), Lys51, 87–91 (DGTTT), Gly415, 478–480 (NAA), and Asp494 contribute to the ATP site.

It belongs to the chaperonin (HSP60) family. Forms a cylinder of 14 subunits composed of two heptameric rings stacked back-to-back. Interacts with the co-chaperonin GroES.

It is found in the cytoplasm. It catalyses the reaction ATP + H2O + a folded polypeptide = ADP + phosphate + an unfolded polypeptide.. In terms of biological role, together with its co-chaperonin GroES, plays an essential role in assisting protein folding. The GroEL-GroES system forms a nano-cage that allows encapsulation of the non-native substrate proteins and provides a physical environment optimized to promote and accelerate protein folding. This Desulfosudis oleivorans (strain DSM 6200 / JCM 39069 / Hxd3) (Desulfococcus oleovorans) protein is Chaperonin GroEL.